Here is a 504-residue protein sequence, read N- to C-terminus: DnaJ homolog subfamily C member 3 (504 aa).

The signal sequence occupies residues 1–31 (MVAPGSVGSRLGAVFPFLLVLVDLQYEGAEC). 9 TPR repeats span residues 37 to 70 (VEKH…DPDN), 72 to 104 (IAYY…KMDF), 105 to 138 (TAAR…NPSE), 154 to 187 (MQRL…CVWD), 188 to 221 (AELR…KSDN), 222 to 255 (TEAF…DQDH), 268 to 301 (LNKL…EPSV), 306 to 339 (VRSK…EPDN), and 340 to 373 (VNAL…NEND). A disulfide bond links Cys248 and Cys258. A Phosphoserine modification is found at Ser274. Cys313 and Cys329 form a disulfide bridge. The interval 375–393 (QIREGLEKAQRLLKQSQKR) is flexible linker. Residues 394 to 462 (DYYKILGVKR…EMRKKFDDGE (69 aa)) form the J domain. Residues 451–481 (DPEMRKKFDDGEDPLDAESQQGGGGNPFHRS) are disordered.

In terms of assembly, interacts with EIF2AK4/GCN2; this interaction occurs under endoplasmic reticulum (ER) stress, hypothermic and amino acid starving stress conditions and inhibits EIF2AK4/GCN2 kinase activity. Interacts with EIF2AK3. Interacts with EIF2AK2. Forms a trimeric complex with DNAJB1 and HSPA8. Interacts with THAP12. Widely expressed, with high level in the liver.

It localises to the endoplasmic reticulum. In terms of biological role, involved in the unfolded protein response (UPR) during endoplasmic reticulum (ER) stress. Acts as a negative regulator of the EIF2AK4/GCN2 kinase activity by preventing the phosphorylation of eIF-2-alpha at 'Ser-52' and hence attenuating general protein synthesis under ER stress, hypothermic and amino acid starving stress conditions. Co-chaperone of HSPA8/HSC70, it stimulates its ATPase activity. May inhibit both the autophosphorylation of EIF2AK2/PKR and the ability of EIF2AK2 to catalyze phosphorylation of the EIF2A. May inhibit EIF2AK3/PERK activity. The polypeptide is DnaJ homolog subfamily C member 3 (Dnajc3) (Mus musculus (Mouse)).